The sequence spans 214 residues: LexA repressor (214 aa).

Positions 28–48 form a DNA-binding region, H-T-H motif; the sequence is IRDIQRELSISSTSVVAYNLR. Residues serine 133 and lysine 172 each act as for autocatalytic cleavage activity in the active site.

The protein belongs to the peptidase S24 family. In terms of assembly, homodimer.

The catalysed reaction is Hydrolysis of Ala-|-Gly bond in repressor LexA.. In terms of biological role, represses a number of genes involved in the response to DNA damage (SOS response), including recA and lexA. In the presence of single-stranded DNA, RecA interacts with LexA causing an autocatalytic cleavage which disrupts the DNA-binding part of LexA, leading to derepression of the SOS regulon and eventually DNA repair. This is LexA repressor from Herpetosiphon aurantiacus (strain ATCC 23779 / DSM 785 / 114-95).